Consider the following 827-residue polypeptide: NT-3 growth factor receptor (827 aa).

The N-terminal stretch at 1–31 (MDVSLCPTKCTFWRVFLLWSIWGDYLLSVLA) is a signal peptide. Disulfide bonds link Cys-32/Cys-38 and Cys-36/Cys-45. Residues 32–430 (CPANCLCSKT…ITVTHKPEED (399 aa)) lie on the Extracellular side of the membrane. N-linked (GlcNAc...) asparagine glycosylation is found at Asn-68, Asn-72, and Asn-79. 2 LRR repeats span residues 104 to 125 (GLQR…AFAK) and 128 to 149 (HLRY…LFQT). In terms of domain architecture, LRRCT spans 160-209 (NPFNCSCDIRWIQLWQEKGEANLQSQQLHCMNLDTAVILLRNMNITQCDL). Asn-163 carries N-linked (GlcNAc...) asparagine glycosylation. 2 cysteine pairs are disulfide-bonded: Cys-164/Cys-189 and Cys-166/Cys-207. Residues Asn-203, Asn-218, Asn-232, Asn-259, Asn-267, Asn-272, and Asn-294 are each glycosylated (N-linked (GlcNAc...) asparagine). Ig-like C2-type domains lie at 210–300 (PEIS…VLLT) and 319–382 (HCIA…VATN). Cys-231 and Cys-284 are oxidised to a cystine. Cys-320 and Cys-362 are joined by a disulfide. Residues Asn-375 and Asn-388 are each glycosylated (N-linked (GlcNAc...) asparagine). A helical transmembrane segment spans residues 431–455 (TFGVSIAVGLAAFACVLLVVLFIMI). At 456-827 (NKYGRRSKFG…ATPIYLDILG (372 aa)) the chain is on the cytoplasmic side. Tyr-518 is subject to Phosphotyrosine; by autocatalysis. The region spanning 540 to 812 (IVLKRELGEG…LNIKEIYKIL (273 aa)) is the Protein kinase domain. ATP is bound by residues 546–554 (LGEGAFGKV) and Lys-574. Residue Asp-681 is the Proton acceptor of the active site. Residues Tyr-707, Tyr-711, Tyr-712, and Tyr-822 each carry the phosphotyrosine; by autocatalysis modification.

Belongs to the protein kinase superfamily. Tyr protein kinase family. Insulin receptor subfamily. As to quaternary structure, exists in a dynamic equilibrium between monomeric (low affinity) and dimeric (high affinity) structures. Interacts with PTPRS. In terms of processing, ligand-mediated auto-phosphorylation.

The protein localises to the membrane. It catalyses the reaction L-tyrosyl-[protein] + ATP = O-phospho-L-tyrosyl-[protein] + ADP + H(+). Functionally, receptor tyrosine kinase involved in nervous system and probably heart development. Upon binding of its ligand NTF3/neurotrophin-3, NTRK3 autophosphorylates and activates different signaling pathways, including the phosphatidylinositol 3-kinase/AKT and the MAPK pathways, that control cell survival and differentiation. The KT and KD isoforms fail to stimulate transformation, process outgrowth or survival. Isoform KI25 exhibits tyrosine phosphorylation in the absence of ligand and is unable to mediate survival of neuronal cells. The sequence is that of NT-3 growth factor receptor (NTRK3) from Gallus gallus (Chicken).